The primary structure comprises 443 residues: Thymidine phosphorylase (443 aa).

Belongs to the thymidine/pyrimidine-nucleoside phosphorylase family. As to quaternary structure, homodimer.

The catalysed reaction is thymidine + phosphate = 2-deoxy-alpha-D-ribose 1-phosphate + thymine. The protein operates within pyrimidine metabolism; dTMP biosynthesis via salvage pathway; dTMP from thymine: step 1/2. The enzymes which catalyze the reversible phosphorolysis of pyrimidine nucleosides are involved in the degradation of these compounds and in their utilization as carbon and energy sources, or in the rescue of pyrimidine bases for nucleotide synthesis. The sequence is that of Thymidine phosphorylase from Shewanella baltica (strain OS155 / ATCC BAA-1091).